We begin with the raw amino-acid sequence, 189 residues long: UPF0312 protein VPA0850 (189 aa).

Residues 1–22 form the signal peptide; that stretch reads MKKSLFATGLAIAMALPLGAQA.

It belongs to the UPF0312 family. Type 1 subfamily.

Its subcellular location is the periplasm. This Vibrio parahaemolyticus serotype O3:K6 (strain RIMD 2210633) protein is UPF0312 protein VPA0850.